The chain runs to 577 residues: MRASRFFISTLKEAPSDAEIVSHKLMMRAGMIKKIGSGIYTYMPMGLRVIRKVEAIIREEMNNAHAIELLMPLVQPAELWQETGRWDKMGAELMRVKDRHGREFAIQPTSEEVVTDVVRTEIKSYRQLPINFYHIQTKFRDERRPRFGLMRGREFTMKDAYSFDRDIDGLKKSYQIMFDAYVKIFNRFGLQFRAVAADNGAIGGSGSHEFHVIADTGEDALVYCPNSDYAANMEAAEALPLSSARAAPTQALTKTATPGKAKCEDVAALLNLPLAQTVKSIVLTVEKEDKGVTSKQVWLLLLRGDHELNEVKAAKIPGIAGYRFASEAEIIEWFDTPPGYLGPINTKKPVNLVVDRTVANMHDFVCGANEVDFHFTGVNWGRDLPEAQVFDIRNVVEGDPSPDGKGTLAIQRGIEVGHVFQLGTAYSESMKATYLDENGKPQLIQMGCYGIGVTRILGAAIEQNFDDKGIIWPTALAPFEVVLCPMGYDRSEGVKAETDKLYEALQAAGVDVILDDRGERPGAMFADWELIGVPHRIVIGDRGLKEGKLEYQGRRDAAATPVALEEMLGFVQAKLAN.

This sequence belongs to the class-II aminoacyl-tRNA synthetase family. ProS type 1 subfamily. As to quaternary structure, homodimer.

It is found in the cytoplasm. It carries out the reaction tRNA(Pro) + L-proline + ATP = L-prolyl-tRNA(Pro) + AMP + diphosphate. Its function is as follows. Catalyzes the attachment of proline to tRNA(Pro) in a two-step reaction: proline is first activated by ATP to form Pro-AMP and then transferred to the acceptor end of tRNA(Pro). As ProRS can inadvertently accommodate and process non-cognate amino acids such as alanine and cysteine, to avoid such errors it has two additional distinct editing activities against alanine. One activity is designated as 'pretransfer' editing and involves the tRNA(Pro)-independent hydrolysis of activated Ala-AMP. The other activity is designated 'posttransfer' editing and involves deacylation of mischarged Ala-tRNA(Pro). The misacylated Cys-tRNA(Pro) is not edited by ProRS. The chain is Proline--tRNA ligase from Janthinobacterium sp. (strain Marseille) (Minibacterium massiliensis).